We begin with the raw amino-acid sequence, 341 residues long: Thromboxane A2 receptor (341 aa).

Over Met-1–Trp-29 the chain is Extracellular. Residues Asn-4 and Asn-16 are each glycosylated (N-linked (GlcNAc...) asparagine). The chain crosses the membrane as a helical span at residues Phe-30 to Ala-52. Residues Arg-53–Leu-65 are Cytoplasmic-facing. The chain crosses the membrane as a helical span at residues Leu-66–Ser-86. Over Gln-87–Tyr-105 the chain is Extracellular. A disulfide bond links Cys-104 and Cys-181. Residues Phe-106–Ser-127 form a helical membrane-spanning segment. Topologically, residues Glu-128–Ala-147 are cytoplasmic. The helical transmembrane segment at Trp-148–Gly-170 threads the bilayer. At Arg-171–Asp-191 the chain is on the extracellular side. Residues Val-192–Val-217 traverse the membrane as a helical segment. Topologically, residues Ala-218–Leu-244 are cytoplasmic. Residues Val-245–Gln-268 form a helical membrane-spanning segment. The Extracellular portion of the chain corresponds to Thr-269 to Leu-287. A helical membrane pass occupies residues Leu-288–Arg-309. The Cytoplasmic portion of the chain corresponds to Arg-310–Pro-341. Ser-328 bears the Phosphoserine mark.

This sequence belongs to the G-protein coupled receptor 1 family. As to quaternary structure, interacts with RPGRIP1L. Interacts with RACK1; the interaction regulates TBXA2R cell surface expression.

Its subcellular location is the cell membrane. Its function is as follows. Receptor for thromboxane A2 (TXA2), a potent stimulator of platelet aggregation. The activity of this receptor is mediated by a G-protein that activates a phosphatidylinositol-calcium second messenger system. In the kidney, the binding of TXA2 to glomerular TP receptors causes intense vasoconstriction. Activates phospholipase C and adenylyl cyclase. The protein is Thromboxane A2 receptor (Tbxa2r) of Mus musculus (Mouse).